A 780-amino-acid chain; its full sequence is ATP-dependent 6-phosphofructokinase, muscle type (780 aa).

Thr-2 bears the N-acetylthreonine mark. The N-terminal catalytic PFK domain 1 stretch occupies residues 2–390; the sequence is THEEHHAAKT…NWEVYKLLAH (389 aa). Residues Gly-25, 88–89, and 118–121 each bind ATP; these read RC and GDGS. Asp-119 lines the Mg(2+) pocket. A Phosphoserine modification is found at Ser-133. Substrate is bound by residues 164–166, Arg-201, 208–210, Glu-264, Arg-292, and 298–301; these read SID, MGR, and HVQR. Catalysis depends on Asp-166, which acts as the Proton acceptor. The residue at position 377 (Ser-377) is a Phosphoserine. Residues 391-401 are interdomain linker; the sequence is VRPPVSKSGSH. The C-terminal regulatory PFK domain 2 stretch occupies residues 402 to 780; the sequence is TVAVMNVGAP…TRKRSGEAAV (379 aa). Beta-D-fructose 2,6-bisphosphate-binding positions include Arg-471 and 528–532; that span reads TVSNN. Ser-530 carries O-linked (GlcNAc) serine glycosylation. Lys-557 carries the post-translational modification N6-(2-hydroxyisobutyryl)lysine. Residues Arg-566, 573 to 575, Glu-629, Arg-655, and 661 to 664 each bind beta-D-fructose 2,6-bisphosphate; these read MGG and HMQQ. Ser-667 carries the post-translational modification Phosphoserine. Position 735 (Arg-735) interacts with beta-D-fructose 2,6-bisphosphate. The residue at position 775 (Ser-775) is a Phosphoserine.

The protein belongs to the phosphofructokinase type A (PFKA) family. ATP-dependent PFK group I subfamily. Eukaryotic two domain clade 'E' sub-subfamily. In terms of assembly, homo- and heterotetramers. Phosphofructokinase (PFK) enzyme functions as a tetramer composed of different combinations of 3 types of subunits, called PFKM (where M stands for Muscle), PFKL (Liver) and PFKP (Platelet). The composition of the PFK tetramer differs according to the tissue type it is present in. In muscles, it is composed of 4 PFKM subunits (also called M4). In the liver, the predominant form is a tetramer of PFKL subunits (L4). In erythrocytes, both PFKM and PFKL subunits randomly tetramerize to form M4, L4 and other combinations (ML3, M2L2, M3L). The kinetic and regulatory properties of the tetrameric enzyme are dependent on the subunit composition, hence can vary across tissues. Interacts (via C-terminus) with HK1 (via N-terminal spermatogenic cell-specific region). Mg(2+) is required as a cofactor. Post-translationally, glcNAcylation decreases enzyme activity.

The protein resides in the cytoplasm. It catalyses the reaction beta-D-fructose 6-phosphate + ATP = beta-D-fructose 1,6-bisphosphate + ADP + H(+). The protein operates within carbohydrate degradation; glycolysis; D-glyceraldehyde 3-phosphate and glycerone phosphate from D-glucose: step 3/4. Allosterically activated by ADP, AMP, or fructose 2,6-bisphosphate, and allosterically inhibited by ATP or citrate. In terms of biological role, catalyzes the phosphorylation of D-fructose 6-phosphate to fructose 1,6-bisphosphate by ATP, the first committing step of glycolysis. The chain is ATP-dependent 6-phosphofructokinase, muscle type (PFKM) from Homo sapiens (Human).